The following is a 160-amino-acid chain: Vesicle transport protein SFT2B (160 aa).

The residue at position 1 (Met1) is an N-acetylmethionine. Over 1-36 (MDKLKKVLSGQDTEDRSGLSEVVEASSLSWSTRIKG) the chain is Cytoplasmic. Phosphoserine is present on Ser9. The chain crosses the membrane as a helical span at residues 37–57 (FIACFAIGILCSLLGTVLLWV). The Lumenal portion of the chain corresponds to 58 to 63 (PRKGLH). The helical transmembrane segment at 64-84 (LFAVFYTFGNIASIGSTIFLM) threads the bilayer. At 85-98 (GPVKQLKRMFEPTR) the chain is on the cytoplasmic side. Residues 99–119 (LIATIMVLLCFALTLCSAFWW) form a helical membrane-spanning segment. Topologically, residues 120-123 (HNKG) are lumenal. A helical membrane pass occupies residues 124 to 144 (LALIFCILQSLALTWYSLSFI). Residues 145–160 (PFARDAVKKCFAVCLA) are Cytoplasmic-facing.

This sequence belongs to the SFT2 family.

The protein localises to the membrane. In terms of biological role, may be involved in fusion of retrograde transport vesicles derived from an endocytic compartment with the Golgi complex. In Homo sapiens (Human), this protein is Vesicle transport protein SFT2B.